Here is a 190-residue protein sequence, read N- to C-terminus: Segregation and condensation protein B (190 aa).

The protein belongs to the ScpB family. Homodimer. Homodimerization may be required to stabilize the binding of ScpA to the Smc head domains. Component of a cohesin-like complex composed of ScpA, ScpB and the Smc homodimer, in which ScpA and ScpB bind to the head domain of Smc. The presence of the three proteins is required for the association of the complex with DNA.

The protein resides in the cytoplasm. In terms of biological role, participates in chromosomal partition during cell division. May act via the formation of a condensin-like complex containing Smc and ScpA that pull DNA away from mid-cell into both cell halves. This is Segregation and condensation protein B from Bacillus mycoides (strain KBAB4) (Bacillus weihenstephanensis).